The primary structure comprises 443 residues: MIAAPFDAVADSTGKKPFYSHLYVQVLAAIAAGILLGHFYPELGAQLKPLGDAFIKLVKMIIAPVIFLTVATGIAGMSDLKKVGRVAGKAMLYFLTFSTLALVIGMVVANVVQPGAGMNIDPASLDPTAVATYASKAHEQSIVGFLTNIIPTTIVGAFADGDILQVLFFSVLFGIALAMVGEKGEQVVNFLNALTAPVFKLVAILMKAAPIGAFGAMAFTIGKYGIGSIANLAMLIGTFYLTSLLFVLVVLGAVARYNGFSILALLRYIKEELLLVLGTSSSEAALPGLMNKMEKAGCKRSVVGLVIPTGYSFNLDGTNIYMTLAALFIAQATGINLSWGDQILLLLVAMLSSKGAAGITGAGFITLAATLSVVPSVPVAGMALILGIDRFMSECRALTNLVGNAVATIVVARWENELDTAQLARALGGQAEESAPAGLQPAE.

A run of 9 helical transmembrane segments spans residues 17-37, 57-77, 92-112, 139-159, 161-181, 201-221, 234-254, 320-340, and 368-388; these read PFYSHLYVQVLAAIAAGILLG, LVKMIIAPVIFLTVATGIAGM, LYFLTFSTLALVIGMVVANVV, EQSIVGFLTNIIPTTIVGAFA, GDILQVLFFSVLFGIALAMVG, LVAILMKAAPIGAFGAMAFTI, MLIGTFYLTSLLFVLVVLGAV, IYMTLAALFIAQATGINLSWG, and AATLSVVPSVPVAGMALILGI.

The protein belongs to the dicarboxylate/amino acid:cation symporter (DAACS) (TC 2.A.23) family.

It is found in the cell inner membrane. In terms of biological role, responsible for the transport of dicarboxylates such as succinate, fumarate, and malate from the periplasm across the membrane. This chain is C4-dicarboxylate transport protein, found in Rhizobium leguminosarum bv. trifolii (strain WSM2304).